The chain runs to 485 residues: Probable glycine dehydrogenase (decarboxylating) subunit 2 (485 aa).

Lys273 is subject to N6-(pyridoxal phosphate)lysine.

This sequence belongs to the GcvP family. C-terminal subunit subfamily. In terms of assembly, the glycine cleavage system is composed of four proteins: P, T, L and H. In this organism, the P 'protein' is a heterodimer of two subunits. Requires pyridoxal 5'-phosphate as cofactor.

It carries out the reaction N(6)-[(R)-lipoyl]-L-lysyl-[glycine-cleavage complex H protein] + glycine + H(+) = N(6)-[(R)-S(8)-aminomethyldihydrolipoyl]-L-lysyl-[glycine-cleavage complex H protein] + CO2. Its function is as follows. The glycine cleavage system catalyzes the degradation of glycine. The P protein binds the alpha-amino group of glycine through its pyridoxal phosphate cofactor; CO(2) is released and the remaining methylamine moiety is then transferred to the lipoamide cofactor of the H protein. The polypeptide is Probable glycine dehydrogenase (decarboxylating) subunit 2 (Oceanobacillus iheyensis (strain DSM 14371 / CIP 107618 / JCM 11309 / KCTC 3954 / HTE831)).